Here is a 173-residue protein sequence, read N- to C-terminus: Putative pre-16S rRNA nuclease (173 aa).

It belongs to the YqgF nuclease family.

It is found in the cytoplasm. In terms of biological role, could be a nuclease involved in processing of the 5'-end of pre-16S rRNA. This chain is Putative pre-16S rRNA nuclease, found in Rhodopirellula baltica (strain DSM 10527 / NCIMB 13988 / SH1).